We begin with the raw amino-acid sequence, 53 residues long: MVRLIVIFLIIAIIAAIFGFGGVAEGAADIAKIIFYIFLVLLVISVLSRLFRK.

The next 2 helical transmembrane spans lie at 4–24 and 27–47; these read LIVIFLIIAIIAAIFGFGGVA and AADIAKIIFYIFLVLLVISVL.

It belongs to the UPF0391 family.

Its subcellular location is the cell membrane. In Christiangramia forsetii (strain DSM 17595 / CGMCC 1.15422 / KT0803) (Gramella forsetii), this protein is UPF0391 membrane protein GFO_1615.